We begin with the raw amino-acid sequence, 272 residues long: Small ribosomal subunit biogenesis GTPase RsgA (272 aa).

In terms of domain architecture, CP-type G spans 56–207 (KNILIRPKVA…IIDTPGFSSI (152 aa)). GTP-binding positions include 105-108 (TKAD) and 151-159 (GQSGVGKTT). C230, C235, H237, and C245 together coordinate Zn(2+).

Belongs to the TRAFAC class YlqF/YawG GTPase family. RsgA subfamily. In terms of assembly, monomer. Associates with 30S ribosomal subunit, binds 16S rRNA. It depends on Zn(2+) as a cofactor.

It localises to the cytoplasm. Functionally, one of several proteins that assist in the late maturation steps of the functional core of the 30S ribosomal subunit. Helps release RbfA from mature subunits. May play a role in the assembly of ribosomal proteins into the subunit. Circularly permuted GTPase that catalyzes slow GTP hydrolysis, GTPase activity is stimulated by the 30S ribosomal subunit. The chain is Small ribosomal subunit biogenesis GTPase RsgA from Mycoplasmopsis pulmonis (strain UAB CTIP) (Mycoplasma pulmonis).